The primary structure comprises 264 residues: 2-dehydro-3-deoxy-D-gluconate 5-dehydrogenase (264 aa).

14-38 (LVTGSTHGLGMAMAKGLGLAGATIV) is an NAD(+) binding site. Position 147 (Ser-147) interacts with substrate. Catalysis depends on Tyr-160, which acts as the Proton acceptor.

This sequence belongs to the short-chain dehydrogenases/reductases (SDR) family. As to quaternary structure, homotetramer.

The protein resides in the cytoplasm. The enzyme catalyses 2-dehydro-3-deoxy-D-gluconate + NAD(+) = 3-deoxy-D-glycero-2,5-hexodiulosonate + NADH + H(+). Its function is as follows. 2-dehydro-3-deoxy-D-gluconate 5-dehydrogenase involved in ulvan degradation. Ulvan is the main polysaccharide component of the Ulvales (green seaweed) cell wall. It is composed of disaccharide building blocks comprising 3-sulfated rhamnose (Rha3S) linked to D-glucuronic acid (GlcA), L-iduronic acid (IduA), or D-xylose (Xyl). Catalyzes the reversible reduction of 2,5-diketo-3-deoxygluconate (DKII or 4,6-dihydroxy-2,5-dioxohexanoate) into 2-keto-3-deoxygluconate (KDG or 2-dehydro-3-deoxygluconate) with a concomitant oxidation of NADH. This Formosa agariphila (strain DSM 15362 / KCTC 12365 / LMG 23005 / KMM 3901 / M-2Alg 35-1) protein is 2-dehydro-3-deoxy-D-gluconate 5-dehydrogenase (kduD).